Here is a 141-residue protein sequence, read N- to C-terminus: VLSPTDKTNVKAAWSKVGSHAGEYGAEALERMFLGFPTTKTYFPHFDLSHGSAQVQAHGKKVGDALTQAVGHLDDLPGALSALSDLHAYKLRVDPVNFKLLSHCLLVTLALHHPDDFTPAIHASLDKFLSNVSTVLTSKYR.

Residues 1-141 (VLSPTDKTNV…VSTVLTSKYR (141 aa)) form the Globin domain. At Ser-3 the chain carries Phosphoserine. Lys-7 carries the post-translational modification N6-succinyllysine. Thr-8 bears the Phosphothreonine mark. Lys-11 bears the N6-succinyllysine mark. Position 16 is an N6-acetyllysine; alternate (Lys-16). Lys-16 is subject to N6-succinyllysine; alternate. Tyr-24 carries the post-translational modification Phosphotyrosine. Lys-40 carries the N6-succinyllysine modification. Phosphoserine is present on Ser-49. Residue His-58 coordinates O2. His-87 serves as a coordination point for heme b. Ser-102 carries the post-translational modification Phosphoserine. The residue at position 108 (Thr-108) is a Phosphothreonine. At Ser-124 the chain carries Phosphoserine. Phosphothreonine occurs at positions 134 and 137. At Ser-138 the chain carries Phosphoserine.

The protein belongs to the globin family. Heterotetramer of two alpha chains and two beta chains. As to expression, red blood cells.

In terms of biological role, involved in oxygen transport from the lung to the various peripheral tissues. This is Hemoglobin subunit alpha-1/2 from Tapirus terrestris (Lowland tapir).